A 143-amino-acid polypeptide reads, in one-letter code: Histone H2B.2, sperm (143 aa).

A disordered region spans residues 1–52; the sequence is MPRSPSKSSPRKGSPRKGSPRKGSPKRGGKGAKRAGKGGRRRNVVKRRRRRR. 5 consecutive short sequence motifs (SPKK motif) follow at residues 4 to 7, 9 to 12, 14 to 17, 19 to 22, and 24 to 27; these read SPSK, SPRK, and SPKR. The segment covering 9-52 has biased composition (basic residues); it reads SPRKGSPRKGSPRKGSPKRGGKGAKRAGKGGRRRNVVKRRRRRR. Serine 14, serine 19, and serine 24 each carry phosphoserine. Serine 130 is a glycosylation site (O-linked (GlcNAc) serine). Residue lysine 138 forms a Glycyl lysine isopeptide (Lys-Gly) (interchain with G-Cter in ubiquitin) linkage.

The protein belongs to the histone H2B family. As to quaternary structure, the nucleosome is a histone octamer containing two molecules each of H2A, H2B, H3 and H4 assembled in one H3-H4 heterotetramer and two H2A-H2B heterodimers. The octamer wraps approximately 147 bp of DNA. Post-translationally, monoubiquitination of Lys-138 gives a specific tag for epigenetic transcriptional activation and is also prerequisite for histone H3 'Lys-4' and 'Lys-79' methylation. In terms of processing, phosphorylated on SPKK motifs 3, 4 and 5; which may regulate DNA binding. Dephosphorylated during maturation of spermatids to mature sperm and rephosphorylated at fertilization. GlcNAcylation at Ser-130 promotes monoubiquitination of Lys-138. It fluctuates in response to extracellular glucose, and associates with transcribed genes. As to expression, testis-specific.

Its subcellular location is the nucleus. It is found in the chromosome. In terms of biological role, core component of nucleosome. Nucleosomes wrap and compact DNA into chromatin, limiting DNA accessibility to the cellular machineries which require DNA as a template. Histones thereby play a central role in transcription regulation, DNA repair, DNA replication and chromosomal stability. DNA accessibility is regulated via a complex set of post-translational modifications of histones, also called histone code, and nucleosome remodeling. The chain is Histone H2B.2, sperm from Lytechinus pictus (Painted sea urchin).